The following is a 228-amino-acid chain: Protein slowmo homolog (228 aa).

The region spanning 1–172 (MPLFETIKHT…TIIKVQKEAE (172 aa)) is the PRELI/MSF1 domain.

The protein belongs to the slowmo family.

The protein is Protein slowmo homolog (slmo) of Dictyostelium discoideum (Social amoeba).